The chain runs to 480 residues: Probable cytosol aminopeptidase (480 aa).

Residues Lys-248 and Asp-253 each coordinate Mn(2+). Lys-260 is an active-site residue. Mn(2+) is bound by residues Asp-271, Asp-330, and Glu-332. The active site involves Arg-334.

It belongs to the peptidase M17 family. Mn(2+) serves as cofactor.

The protein localises to the cytoplasm. It carries out the reaction Release of an N-terminal amino acid, Xaa-|-Yaa-, in which Xaa is preferably Leu, but may be other amino acids including Pro although not Arg or Lys, and Yaa may be Pro. Amino acid amides and methyl esters are also readily hydrolyzed, but rates on arylamides are exceedingly low.. The enzyme catalyses Release of an N-terminal amino acid, preferentially leucine, but not glutamic or aspartic acids.. Its function is as follows. Presumably involved in the processing and regular turnover of intracellular proteins. Catalyzes the removal of unsubstituted N-terminal amino acids from various peptides. This Solibacter usitatus (strain Ellin6076) protein is Probable cytosol aminopeptidase.